Here is a 440-residue protein sequence, read N- to C-terminus: MAVKLGTLLLALALGLAQPASARRKLLVFLLDGFRSDYISDEALESLPGFKEIVSRGVKVDYLTPDFPSLSYPNYYTLMTGRHCEVHQMIGNYMWDPTTNKSFDIGVNKDSLMPLWWNGSEPLWVTLTKAKRKVYMYYWPGCEVEILGVRPTYCLEYKNVPTDINFANAVSDALDSFKSGRADLAAIYHERIDVEGHHYGPASPQRKDALKAVDTVLKYMTKWIQERGLQDRLNVIIFSDHGMTDIFWMDKVIELNKYISLNDLQQVKDRGPVVSLWPAPGKHSEIYNKLSTVEHMTVYEKEAIPSRFYYKKGKFVSPLTLVADEGWFITENREMLPFWMNSTGRREGWQRGWHGYDNELMDMRGIFLAFGPDFKSNFRAAPIRSVDVYNVMCNVVGITPLPNNGSWSRVMCMLKGRASTAPPVWPSHCALALILLFLLA.

Positions 1 to 22 (MAVKLGTLLLALALGLAQPASA) are cleaved as a signal peptide. 3 residues coordinate substrate: Asp32, Ser71, and Asn92. Zn(2+) contacts are provided by Asp32 and Ser71. Ser71 (nucleophile) is an active-site residue. Ser71 bears the Phosphoserine mark. N-linked (GlcNAc...) asparagine glycosylation is found at Asn100 and Asn118. An intrachain disulfide couples Cys142 to Cys154. Asp193 lines the substrate pocket. The Zn(2+) site is built by Asp193, His197, Asp240, and His241. Position 241 (His241) interacts with substrate. N-linked (GlcNAc...) asparagine glycosylation is present at Asn341. His354 contacts substrate. His354 contributes to the Zn(2+) binding site. N-linked (GlcNAc...) asparagine glycosylation is present at Asn404. Residue Ser419 is the site of GPI-anchor amidated serine attachment. The propeptide at 420–440 (TAPPVWPSHCALALILLFLLA) is removed in mature form.

The protein belongs to the nucleotide pyrophosphatase/phosphodiesterase family. Homodimer; disulfide-linked. Homotetramer. Zn(2+) serves as cofactor. As to expression, predominantly expressed in kidney and brain. In the kidney, expressed specifically in the proximal tubules and thin descending limbs of Henle (at protein level).

Its subcellular location is the cell membrane. It carries out the reaction sn-glycerol 3-phosphocholine + H2O = phosphocholine + glycerol + H(+). The enzyme catalyses a 1-acyl-sn-glycero-3-phosphocholine + H2O = a 1-acyl-sn-glycerol + phosphocholine + H(+). The catalysed reaction is a 1-O-alkyl-sn-glycero-3-phosphocholine + H2O = a 1-O-alkyl-sn-glycerol + phosphocholine + H(+). It catalyses the reaction 1-dodecanoyl-sn-glycero-3-phosphocholine + H2O = 1-dodecanoyl-sn-glycerol + phosphocholine + H(+). It carries out the reaction 1-hexadecanoyl-sn-glycero-3-phosphocholine + H2O = 1-hexadecanoyl-sn-glycerol + phosphocholine + H(+). The enzyme catalyses 1-(5Z,8Z,11Z,14Z-eicosatetraenoyl)-sn-glycero-3-phosphocholine + H2O = 1-(5Z,8Z,11Z,14Z-eicosatetraenoyl)-sn-glycerol + phosphocholine + H(+). The catalysed reaction is 1-tetradecanoyl-sn-glycero-3-phosphocholine + H2O = 1-tetradecanoyl-sn-glycerol + phosphocholine + H(+). It catalyses the reaction sphing-4-enine-phosphocholine + H2O = sphing-4-enine + phosphocholine + H(+). It carries out the reaction 1-(9Z-octadecenoyl)-sn-glycero-3-phosphocholine + H2O = 1-(9Z-octadecenoyl)-sn-glycerol + phosphocholine + H(+). The enzyme catalyses 1-(9Z,12Z)-octadecadienoyl-sn-glycero-3-phosphocholine + H2O = 1-(9Z,12Z-octadecadienoyl)-sn-glycerol + phosphocholine + H(+). The catalysed reaction is glycero-2-phosphocholine + H2O = phosphocholine + glycerol + H(+). Inhibited by EDTA and EGTA in vitro. Functionally, choline-specific glycerophosphodiesterase that hydrolyzes glycerophosphocholine (GPC) and lysophosphatidylcholine (LPC) and contributes to supplying choline to the cells. Has a preference for LPC with short (12:0 and 14:0) or polyunsaturated (18:2 and 20:4) fatty acids. In vitro, hydrolyzes only choline-containing lysophospholipids, such as sphingosylphosphorylcholine (SPC), platelet-activating factor (PAF) and lysoPAF, but not other lysophospholipids. The polypeptide is Glycerophosphocholine cholinephosphodiesterase ENPP6 (Homo sapiens (Human)).